A 1374-amino-acid chain; its full sequence is DNA-directed RNA polymerase subunit beta' (1374 aa).

The tract at residues 1–47 is disordered; that stretch reads MTSTSPKSRKPSTKTTKSKSKSKSKSKAAKAAAASASPALARTPPQF. Positions 7-28 are enriched in basic residues; that stretch reads KSRKPSTKTTKSKSKSKSKSKA. The segment covering 29-45 has biased composition (low complexity); sequence AKAAAASASPALARTPP. Positions 258, 325, 332, and 335 each coordinate Zn(2+). A disordered region spans residues 1343-1374; the sequence is VRPTGENELEEEQLPDPSALEGLQQEGLLTEE. The span at 1362 to 1374 shows a compositional bias: low complexity; that stretch reads LEGLQQEGLLTEE.

The protein belongs to the RNA polymerase beta' chain family. RpoC2 subfamily. In terms of assembly, in cyanobacteria the RNAP catalytic core is composed of 2 alpha, 1 beta, 1 beta', 1 gamma and 1 omega subunit. When a sigma factor is associated with the core the holoenzyme is formed, which can initiate transcription. The cofactor is Zn(2+).

The catalysed reaction is RNA(n) + a ribonucleoside 5'-triphosphate = RNA(n+1) + diphosphate. Functionally, DNA-dependent RNA polymerase catalyzes the transcription of DNA into RNA using the four ribonucleoside triphosphates as substrates. The polypeptide is DNA-directed RNA polymerase subunit beta' (Prochlorococcus marinus (strain MIT 9303)).